A 513-amino-acid chain; its full sequence is MSPAAPVTESSAAEVHREQTDAPREPQRPLKQSLSKSLCRESHWKCLLLSLLMYCCVIAMTWCQVTKVTRLSFDSTFKVKSMIYHDSPCSNGYIYIPVAFLVMLYVVYLVECWQCYSRNELQFKVDLESVTERVQRMQQATPCIWWKAISYHYIRRTRQVTRYRNGDAYTSTQVYHERVNTHVAEAEFDYGNCGVKDIPKHLAGSDGFPVTKLRFTKCFSFANVESENSYLTQRARFFTENEGLDDYMEAREGMHLKNVEFKEYMVAFADPNRLPWYASTCSFWLAAAFTLSWPLRVLTEYRTAYLHYHVEKLFGFDYVSVTPLDHERPFCRHIPRVNTIDSTELEWHIRSNQQLVPSYSEAVLMNLTQQSSCNTFSARGIGAAGGNGFGGYRQNCERCHRSISSSSIFSRSALSICNSSNPRLAFSSSRFSLGRLYGSRRSCLWQSRSSSLNDPGCPTESTRCLANEESPPSPPAYQDALYFPVLIIHRNEGCIAHDHHSLHRNGSCVETSL.

The tract at residues 1-29 (MSPAAPVTESSAAEVHREQTDAPREPQRP) is disordered. Residues 14–28 (EVHREQTDAPREPQR) are compositionally biased toward basic and acidic residues. A run of 3 helical transmembrane segments spans residues 46–66 (CLLL…CQVT), 93–113 (YIYI…VECW), and 274–294 (LPWY…LSWP). N-linked (GlcNAc...) asparagine glycosylation is found at Asn-366, Asn-418, and Asn-505.

This sequence belongs to the TMEM151 family.

It localises to the membrane. This chain is Transmembrane protein 151B (tmem151b), found in Danio rerio (Zebrafish).